The primary structure comprises 62 residues: MTILFQLALAALVALSFLMVIGVPVAYASPTNWEQSKSLIFVGSIAWTVLVIAVGVLNFFVI.

The next 2 membrane-spanning stretches (helical) occupy residues 8–28 and 41–61; these read ALAA…VAYA and FVGS…NFFV.

This sequence belongs to the PsbZ family. As to quaternary structure, PSII is composed of 1 copy each of membrane proteins PsbA, PsbB, PsbC, PsbD, PsbE, PsbF, PsbH, PsbI, PsbJ, PsbK, PsbL, PsbM, PsbT, PsbX, PsbY, PsbZ, Psb30/Ycf12, peripheral proteins PsbO, CyanoQ (PsbQ), PsbU, PsbV and a large number of cofactors. It forms dimeric complexes.

The protein localises to the cellular thylakoid membrane. May control the interaction of photosystem II (PSII) cores with the light-harvesting antenna, regulates electron flow through the 2 photosystem reaction centers. PSII is a light-driven water plastoquinone oxidoreductase, using light energy to abstract electrons from H(2)O, generating a proton gradient subsequently used for ATP formation. The protein is Photosystem II reaction center protein Z of Picosynechococcus sp. (strain ATCC 27264 / PCC 7002 / PR-6) (Agmenellum quadruplicatum).